The sequence spans 349 residues: Green-sensitive opsin-1 (349 aa).

Residues 1–36 (MNGTEGSNFYIPMSNRTGLVRSPYDYTQYYLAEPWK) lie on the Extracellular side of the membrane. Residues asparagine 2 and asparagine 15 are each glycosylated (N-linked (GlcNAc...) asparagine). The helical transmembrane segment at 37–61 (FKALAFYMFLLIIFGFPINVLTLVV) threads the bilayer. The Cytoplasmic segment spans residues 62–73 (TAQHKKLRQPLN). Residues 74 to 99 (YILVNLAFAGTIMVIFGFTVSFYCSL) traverse the membrane as a helical segment. Residues 100-113 (VGYMALGPLGCVME) lie on the Extracellular side of the membrane. Cysteine 110 and cysteine 187 are oxidised to a cystine. The helical transmembrane segment at 114–133 (GFFATLGGQVALWSLVVLAI) threads the bilayer. Residues 134–152 (ERYIVVCKPMGSFKFSANH) lie on the Cytoplasmic side of the membrane. Residues 153–176 (AMAGIAFTWFMACSCAVPPLFGWS) form a helical membrane-spanning segment. Residues 177 to 202 (RYLPEGMQTSCGPDYYTLNPEYNNES) are Extracellular-facing. Asparagine 200 carries N-linked (GlcNAc...) asparagine glycosylation. A helical membrane pass occupies residues 203 to 230 (YVMYMFSCHFCIPVTTIFFTYGSLVCTV). The Cytoplasmic portion of the chain corresponds to 231–252 (KAAAAQQQESESTQKAEREVTR). A helical membrane pass occupies residues 253 to 276 (MVILMVLGFLFAWVPYASFAAWIF). Residues 277–284 (FNRGAAFS) are Extracellular-facing. Residues 285 to 309 (AQAMAVPAFFSKTSAVFNPIIYVLL) traverse the membrane as a helical segment. The residue at position 296 (lysine 296) is an N6-(retinylidene)lysine. Residues 310-349 (NKQFRSCMLNTLFCGKSPLGDDESSSVSTSKTEVSSVSPA) are Cytoplasmic-facing. Residues 328–349 (LGDDESSSVSTSKTEVSSVSPA) form a disordered region. The span at 334–349 (SSVSTSKTEVSSVSPA) shows a compositional bias: low complexity.

This sequence belongs to the G-protein coupled receptor 1 family. Opsin subfamily. Phosphorylated on some or all of the serine and threonine residues present in the C-terminal region. As to expression, retinal double cone accessory photoreceptor cell outer segments.

It localises to the membrane. In terms of biological role, visual pigments are the light-absorbing molecules that mediate vision. They consist of an apoprotein, opsin, covalently linked to cis-retinal. This Danio rerio (Zebrafish) protein is Green-sensitive opsin-1 (opn1mw1).